A 148-amino-acid polypeptide reads, in one-letter code: Small ribosomal subunit protein eS6 (148 aa).

This sequence belongs to the eukaryotic ribosomal protein eS6 family.

This is Small ribosomal subunit protein eS6 from Pyrobaculum neutrophilum (strain DSM 2338 / JCM 9278 / NBRC 100436 / V24Sta) (Thermoproteus neutrophilus).